We begin with the raw amino-acid sequence, 121 residues long: Large ribosomal subunit protein uL24 (121 aa).

This sequence belongs to the universal ribosomal protein uL24 family. As to quaternary structure, part of the 50S ribosomal subunit.

Functionally, one of two assembly initiator proteins, it binds directly to the 5'-end of the 23S rRNA, where it nucleates assembly of the 50S subunit. Located at the polypeptide exit tunnel on the outside of the subunit. This Pyrococcus furiosus (strain ATCC 43587 / DSM 3638 / JCM 8422 / Vc1) protein is Large ribosomal subunit protein uL24.